The sequence spans 580 residues: Rap guanine nucleotide exchange factor 5 (580 aa).

The 134-residue stretch at 67-200 (DRYVVVSGTP…ELKEFQKILG (134 aa)) folds into the N-terminal Ras-GEF domain. The 236-residue stretch at 344-579 (NTWDLALELM…FELSHRLEPR (236 aa)) folds into the Ras-GEF domain.

As to expression, in the embryo, expressed in young neurons of the developing telencephalon, diencephalon and hindbrain. Not expressed in progenitor cells in the ventricular zone.

Its subcellular location is the nucleus. Functionally, guanine nucleotide exchange factor (GEF) for RAP1A, RAP2A and MRAS/M-Ras-GTP. Its association with MRAS inhibits Rap1 activation. The sequence is that of Rap guanine nucleotide exchange factor 5 (Rapgef5) from Rattus norvegicus (Rat).